Reading from the N-terminus, the 145-residue chain is Phospholipase A2 (145 aa).

Residues 1–15 (MRLLVLAALLTVGAG) form the signal peptide. Glutamine 16 carries the pyrrolidone carboxylic acid modification. Positions 16-22 (QAGLNSR) are cleaved as a propeptide — removed by trypsin. Disulfide bonds link cysteine 33–cysteine 99, cysteine 49–cysteine 145, cysteine 51–cysteine 67, cysteine 66–cysteine 127, cysteine 73–cysteine 120, cysteine 83–cysteine 113, and cysteine 106–cysteine 118. Residues tyrosine 50, glycine 52, and glycine 54 each coordinate Ca(2+). Histidine 70 is a catalytic residue. Aspartate 71 is a Ca(2+) binding site. Aspartate 121 is a catalytic residue.

Belongs to the phospholipase A2 family. As to quaternary structure, monomer or homodimer. Ca(2+) serves as cofactor. Activated by trypsin cleavage in the duodenum. Can also be activated by thrombin or autocatalytically.

The protein resides in the secreted. The catalysed reaction is a 1,2-diacyl-sn-glycero-3-phosphocholine + H2O = a 1-acyl-sn-glycero-3-phosphocholine + a fatty acid + H(+). The enzyme catalyses 1,2-ditetradecanoyl-sn-glycero-3-phosphocholine + H2O = 1-tetradecanoyl-sn-glycero-3-phosphocholine + tetradecanoate + H(+). It carries out the reaction 1,2-dihexadecanoyl-sn-glycero-3-phosphocholine + H2O = 1-hexadecanoyl-sn-glycero-3-phosphocholine + hexadecanoate + H(+). It catalyses the reaction 1-hexadecanoyl-2-(9Z-octadecenoyl)-sn-glycero-3-phosphocholine + H2O = 1-hexadecanoyl-sn-glycero-3-phosphocholine + (9Z)-octadecenoate + H(+). The catalysed reaction is 1-hexadecanoyl-2-(5Z,8Z,11Z,14Z-eicosatetraenoyl)-sn-glycero-3-phosphocholine + H2O = 1-hexadecanoyl-sn-glycero-3-phosphocholine + (5Z,8Z,11Z,14Z)-eicosatetraenoate + H(+). The enzyme catalyses 1-hexadecanoyl-2-(9Z-octadecenoyl)-sn-glycero-3-phospho-(1'-sn-glycerol) + H2O = 1-hexadecanoyl-sn-glycero-3-phospho-(1'-sn-glycerol) + (9Z)-octadecenoate + H(+). It carries out the reaction N-hexadecanoyl-1,2-di-(9Z-octadecenoyl)-sn-glycero-3-phosphoethanolamine + H2O = N-hexadecanoyl-1-(9Z-octadecenoyl)-sn-glycero-3-phosphoethanolamine + (9Z)-octadecenoate + H(+). It catalyses the reaction 1-hexadecanoyl-2-(9Z,12Z-octadecadienoyl)-sn-glycero-3-phosphoethanolamine + H2O = 1-hexadecanoyl-sn-glycero-3-phosphoethanolamine + (9Z,12Z)-octadecadienoate + H(+). The catalysed reaction is N,1-dihexadecanoyl-2-(9Z,12Z-octadecadienoyl)-sn-glycero-3-phosphoethanolamine + H2O = N,1-dihexadecanoyl-sn-glycero-3-phosphoethanolamine + (9Z,12Z)-octadecadienoate + H(+). In terms of biological role, secretory calcium-dependent phospholipase A2 that primarily targets dietary phospholipids in the intestinal tract. Hydrolyzes the ester bond of the fatty acyl group attached at sn-2 position of phospholipids (phospholipase A2 activity) with preference for phosphatidylethanolamines and phosphatidylglycerols over phosphatidylcholines. May play a role in the biosynthesis of N-acyl ethanolamines that regulate energy metabolism and inflammation in the intestinal tract. Hydrolyzes N-acyl phosphatidylethanolamines to N-acyl lysophosphatidylethanolamines, which are further cleaved by a lysophospholipase D to release N-acyl ethanolamines. May act in an autocrine and paracrine manner. Has anti-helminth activity in a process regulated by gut microbiota. Upon helminth infection of intestinal epithelia, directly affects phosphatidylethanolamine contents in the membrane of helminth larvae, likely controlling an array of phospholipid-mediated cellular processes such as membrane fusion and cell division while providing for better immune recognition, ultimately reducing larvae integrity and infectivity. The sequence is that of Phospholipase A2 (PLA2G1B) from Bos taurus (Bovine).